A 652-amino-acid chain; its full sequence is Phosphomethylpyrimidine synthase (652 aa).

Substrate is bound by residues N257, M286, Y315, H351, 371 to 373 (SRG), 412 to 415 (DGLR), and E451. H455 is a Zn(2+) binding site. Residue Y478 coordinates substrate. H519 lines the Zn(2+) pocket. [4Fe-4S] cluster-binding residues include C599, C602, and C607.

This sequence belongs to the ThiC family. In terms of assembly, homodimer. It depends on [4Fe-4S] cluster as a cofactor.

The enzyme catalyses 5-amino-1-(5-phospho-beta-D-ribosyl)imidazole + S-adenosyl-L-methionine = 4-amino-2-methyl-5-(phosphooxymethyl)pyrimidine + CO + 5'-deoxyadenosine + formate + L-methionine + 3 H(+). Its pathway is cofactor biosynthesis; thiamine diphosphate biosynthesis. Functionally, catalyzes the synthesis of the hydroxymethylpyrimidine phosphate (HMP-P) moiety of thiamine from aminoimidazole ribotide (AIR) in a radical S-adenosyl-L-methionine (SAM)-dependent reaction. This Thiobacillus denitrificans (strain ATCC 25259 / T1) protein is Phosphomethylpyrimidine synthase.